The sequence spans 340 residues: Conidiation-specific protein 13 (340 aa).

The segment at 313–340 is disordered; the sequence is AEAAAGISSGKPAADRKTKGKKGTKFRV. The segment covering 330–340 has biased composition (basic residues); sequence TKGKKGTKFRV.

The chain is Conidiation-specific protein 13 (con-13) from Neurospora crassa (strain ATCC 24698 / 74-OR23-1A / CBS 708.71 / DSM 1257 / FGSC 987).